Here is a 233-residue protein sequence, read N- to C-terminus: Phosphoglycolate phosphatase 2 (233 aa).

The active-site Nucleophile is the Asp-13. Mg(2+)-binding residues include Asp-13 and Asp-15. Lys-152 provides a ligand contact to substrate. The Mg(2+) site is built by Asp-174 and Asp-178.

This sequence belongs to the archaeal SPP-like hydrolase family. Mg(2+) is required as a cofactor.

The enzyme catalyses 2-phosphoglycolate + H2O = glycolate + phosphate. Its function is as follows. Catalyzes the dephosphorylation of 2-phosphoglycolate. The chain is Phosphoglycolate phosphatase 2 from Saccharolobus solfataricus (strain ATCC 35092 / DSM 1617 / JCM 11322 / P2) (Sulfolobus solfataricus).